A 555-amino-acid polypeptide reads, in one-letter code: MIWVAVVITMLLFILVAKPTGIYLEKAFQGSKKLDKVFGPFEKLIFKITGVKEYNQTWKQYALSLVLLNGFMIVVVYFIFRLQGVLPLNPAHIEGMEPTLAFNTAISFMADTNLQHYSGENGLSYLSQLIGITFLMFAAPATTLALVMAFIRGLAGKELGNFFIDFTRALTRVFLPIAFMAALVFVAFGVPQTLDGAVTAQTIDGAKQSILRGPVASFVAIKELGNNGGGFFGANSTHPFENPGQMSNILQMMLMMLLPTALPFTYGRMVGNKKQGRILFVSLFMVFLLGFITITTSELNGNPALNGMGIEHVQGSTEGKEVRFGTVFSSLYATVTTAAETGAVNTMHDTLTPIGGLVPLVNMMLNTVYGGVGAGFVNIIMYAIIAVFISGLMVGRTPEFLGKKIEGKEMKLIAVTILFHPLLILGFSALALSTSLGTDAISHSGFHGLTQVVYEYTSSAANNGSGFEGLGDNTPFWNITTGLVMFLGRYFSLITMLAVAASLKEKTVVPETVGTFRTDNSLFGGIFIGTIVIVGALTFFPMLVLGPIAEFLTLK.

A run of 10 helical transmembrane segments spans residues 2 to 22, 60 to 80, 130 to 150, 173 to 193, 246 to 266, 278 to 298, 374 to 394, 412 to 432, 483 to 503, and 525 to 545; these read IWVA…PTGI, QYAL…YFIF, IGIT…VMAF, VFLP…VPQT, MSNI…PFTY, ILFV…TTSE, AGFV…GLMV, LIAV…ALAL, LVMF…AASL, and GIFI…MLVL.

This sequence belongs to the KdpA family. As to quaternary structure, the system is composed of three essential subunits: KdpA, KdpB and KdpC.

It localises to the cell membrane. Its function is as follows. Part of the high-affinity ATP-driven potassium transport (or Kdp) system, which catalyzes the hydrolysis of ATP coupled with the electrogenic transport of potassium into the cytoplasm. This subunit binds the extracellular potassium ions and delivers the ions to the membrane domain of KdpB through an intramembrane tunnel. This chain is Potassium-transporting ATPase potassium-binding subunit, found in Bacillus cereus (strain ZK / E33L).